The following is a 362-amino-acid chain: sn-glycerol-3-phosphate import ATP-binding protein UgpC (362 aa).

The region spanning 4 to 235 (LKLQAVTKSY…PATLFVASFI (232 aa)) is the ABC transporter domain. Residue 37–44 (GPSGCGKS) participates in ATP binding.

It belongs to the ABC transporter superfamily. sn-glycerol-3-phosphate importer (TC 3.A.1.1.3) family. The complex is composed of two ATP-binding proteins (UgpC), two transmembrane proteins (UgpA and UgpE) and a solute-binding protein (UgpB).

Its subcellular location is the cell inner membrane. It catalyses the reaction sn-glycerol 3-phosphate(out) + ATP + H2O = sn-glycerol 3-phosphate(in) + ADP + phosphate + H(+). Part of the ABC transporter complex UgpBAEC involved in sn-glycerol-3-phosphate (G3P) import. Responsible for energy coupling to the transport system. The polypeptide is sn-glycerol-3-phosphate import ATP-binding protein UgpC (Yersinia enterocolitica serotype O:8 / biotype 1B (strain NCTC 13174 / 8081)).